We begin with the raw amino-acid sequence, 620 residues long: 1-deoxy-D-xylulose-5-phosphate synthase (620 aa).

Thiamine diphosphate contacts are provided by residues His-80 and 121–123 (GHS). Asp-152 lines the Mg(2+) pocket. Residues 153-154 (GA), Asn-181, Tyr-288, and Glu-370 contribute to the thiamine diphosphate site. Asn-181 is a binding site for Mg(2+).

This sequence belongs to the transketolase family. DXPS subfamily. Homodimer. Requires Mg(2+) as cofactor. Thiamine diphosphate serves as cofactor.

It carries out the reaction D-glyceraldehyde 3-phosphate + pyruvate + H(+) = 1-deoxy-D-xylulose 5-phosphate + CO2. The protein operates within metabolic intermediate biosynthesis; 1-deoxy-D-xylulose 5-phosphate biosynthesis; 1-deoxy-D-xylulose 5-phosphate from D-glyceraldehyde 3-phosphate and pyruvate: step 1/1. Catalyzes the acyloin condensation reaction between C atoms 2 and 3 of pyruvate and glyceraldehyde 3-phosphate to yield 1-deoxy-D-xylulose-5-phosphate (DXP). This Escherichia coli O127:H6 (strain E2348/69 / EPEC) protein is 1-deoxy-D-xylulose-5-phosphate synthase.